The primary structure comprises 639 residues: Exocyst complex component EXO70E2 (639 aa).

It belongs to the EXO70 family. In terms of assembly, component of the exocyst complex and of the exocyst-positive organelle (EXPO). Interacts with SEC6, SEC10A and SEC10B. As to expression, expressed in roots, in the root-hair zone, both in root hair and nonhair cells.

It is found in the secreted. The protein localises to the extracellular exosome. The protein resides in the cell membrane. It localises to the cytoplasm. Its subcellular location is the endomembrane system. Influences the subcellular localization patterns of other exocyst complex proteins (e.g. SEC5A, SEC15A, SEC15B and EXO84B) leading to their recruitment to exocyst, well-defined large punctate structures throughout the cytosol. Essential component for the formation and the recruitment of exocyst subunits to the exocyst-positive organelle (EXPO), a secreted double membrane structure also called extracellular exosome, that acts as a sequester for cytosolic proteins to release them into the apoplast. This is Exocyst complex component EXO70E2 from Arabidopsis thaliana (Mouse-ear cress).